The primary structure comprises 405 residues: Polyadenylate-binding protein RBP45B (405 aa).

Positions 1 to 19 (MMQQPPPGGILPHHAPPPS) are enriched in pro residues. The interval 1-54 (MMQQPPPGGILPHHAPPPSAQQQYGYQQPYGIAGAAPPPPQMWNPQAAAPPSVQ) is disordered. Residues 20–35 (AQQQYGYQQPYGIAGA) show a composition bias toward low complexity. RRM domains lie at 62–143 (RTLW…WASL), 155–234 (YTIF…PAAS), and 261–333 (TTVF…WGRS). Residues 379 to 405 (GGYQQTPQAGQQPPQQPPQQQQVGFSY) form a disordered region. The segment covering 380–405 (GYQQTPQAGQQPPQQPPQQQQVGFSY) has biased composition (low complexity).

Belongs to the polyadenylate-binding RBP45 family. In terms of assembly, both isoform 1 and isoform 2 interact with poly(A)+ RNA in nucleus. As to expression, expressed in roots, leaves, stems, flowers, siliques, and seedlings. Present in immature anther tissues (tapetum cells) and mature pollen grains.

The protein resides in the nucleus. Functionally, heterogeneous nuclear ribonucleoprotein (hnRNP)-protein binding the poly(A) tail of mRNA and probably involved in some steps of pre-mRNA maturation. The protein is Polyadenylate-binding protein RBP45B (RBP45B) of Arabidopsis thaliana (Mouse-ear cress).